A 437-amino-acid polypeptide reads, in one-letter code: Elongation factor 1-gamma (437 aa).

Ala-2 bears the N-acetylalanine mark. Residues 2 to 87 (AAGTLYTYPE…YVSNEELRGS (86 aa)) form the GST N-terminal domain. In terms of domain architecture, GST C-terminal spans 88–216 (TPEAAAQVVQ…VKLCEKMAQF (129 aa)). 2 positions are modified to N6-acetyllysine: Lys-147 and Lys-212. Positions 221–254 (FAESQPKKDTPRKEKGSREEKQKPQAERKEEKKA) are enriched in basic and acidic residues. The tract at residues 221–268 (FAESQPKKDTPRKEKGSREEKQKPQAERKEEKKAAAPAPEEEMDECEQ) is disordered. Lys-253 is covalently cross-linked (Glycyl lysine isopeptide (Lys-Gly) (interchain with G-Cter in SUMO1)). An EF-1-gamma C-terminal domain is found at 276-437 (AKDPFAHLPK…KAFNQGKIFK (162 aa)). Lys-285 participates in a covalent cross-link: Glycyl lysine isopeptide (Lys-Gly) (interchain with G-Cter in SUMO2). Lys-401 bears the N6-acetyllysine mark. Lys-434 is subject to N6-acetyllysine; alternate. The residue at position 434 (Lys-434) is an N6-malonyllysine; alternate.

As to quaternary structure, EF-1 is composed of four subunits: alpha, beta, delta, and gamma.

Probably plays a role in anchoring the complex to other cellular components. This Equus caballus (Horse) protein is Elongation factor 1-gamma (EEF1G).